A 162-amino-acid chain; its full sequence is Early E1A 18 kDa protein (162 aa).

Residues 134-162 (EEPTEGVAENSLKRQADSSLCSSSPKRFC) are disordered. Polar residues predominate over residues 150 to 162 (DSSLCSSSPKRFC).

The sequence is that of Early E1A 18 kDa protein from Tree shrew adenovirus serotype 1 (TSAdV-1).